Consider the following 1807-residue polypeptide: Phospholipase D (1807 aa).

The disordered stretch occupies residues M1–P28. Transmembrane regions (helical) follow at residues I257–S277, A305–Y325, and V587–A607. The disordered stretch occupies residues T697–S734. PLD phosphodiesterase domains lie at G853–R880 and E1249–S1276. Residues H858, K860, D865, H1254, K1256, and D1261 contribute to the active site. Composition is skewed to polar residues over residues F1531–D1547, Y1568–S1578, and Y1597–A1614. Residues F1531–S1621 form a disordered region.

It belongs to the phospholipase D family. TM-PLD subfamily.

It is found in the membrane. It catalyses the reaction a 1,2-diacyl-sn-glycero-3-phosphocholine + H2O = a 1,2-diacyl-sn-glycero-3-phosphate + choline + H(+). Its function is as follows. Hydrolyzes glycerol-phospholipids at the terminal phosphodiesteric bond. The polypeptide is Phospholipase D (Phytophthora infestans (Potato late blight agent)).